Reading from the N-terminus, the 464-residue chain is Fumarate hydratase class II (464 aa).

Residues 100–102 (SGT), 131–134 (HPND), 141–143 (SSN), and Thr189 each bind substrate. Catalysis depends on His190, which acts as the Proton donor/acceptor. Ser320 is an active-site residue. Residues Ser321 and 326-328 (KVN) each bind substrate.

This sequence belongs to the class-II fumarase/aspartase family. Fumarase subfamily. As to quaternary structure, homotetramer.

It localises to the cytoplasm. The catalysed reaction is (S)-malate = fumarate + H2O. The protein operates within carbohydrate metabolism; tricarboxylic acid cycle; (S)-malate from fumarate: step 1/1. Involved in the TCA cycle. Catalyzes the stereospecific interconversion of fumarate to L-malate. This is Fumarate hydratase class II from Deinococcus radiodurans (strain ATCC 13939 / DSM 20539 / JCM 16871 / CCUG 27074 / LMG 4051 / NBRC 15346 / NCIMB 9279 / VKM B-1422 / R1).